Reading from the N-terminus, the 172-residue chain is Adenine phosphoribosyltransferase (172 aa).

This sequence belongs to the purine/pyrimidine phosphoribosyltransferase family. As to quaternary structure, homodimer.

The protein resides in the cytoplasm. It catalyses the reaction AMP + diphosphate = 5-phospho-alpha-D-ribose 1-diphosphate + adenine. The protein operates within purine metabolism; AMP biosynthesis via salvage pathway; AMP from adenine: step 1/1. Functionally, catalyzes a salvage reaction resulting in the formation of AMP, that is energically less costly than de novo synthesis. This Methanococcus maripaludis (strain DSM 14266 / JCM 13030 / NBRC 101832 / S2 / LL) protein is Adenine phosphoribosyltransferase.